The chain runs to 206 residues: Protein DEHYDRATION-INDUCED 19 (206 aa).

The residue at position 105 (T105) is a Phosphothreonine. S107 is modified (phosphoserine). A disordered region spans residues 142-167 (SSFISPTRSQSSPAPRQTKNVSEDKQ). A compositionally biased stretch (polar residues) spans 143 to 161 (SFISPTRSQSSPAPRQTKN).

It belongs to the Di19 family. In terms of assembly, interacts with ADO2/LKP2, CPK11 and CPK4. Weak interaction with CPK12 and no interactions with CPK1, CPK5 or CPK26. Phosphorylated within the NLS/NES region. As to expression, expressed in seedlings, roots, leaves, stems, flowers and siliques.

It is found in the nucleus. This Arabidopsis thaliana (Mouse-ear cress) protein is Protein DEHYDRATION-INDUCED 19 (DI19-1).